Reading from the N-terminus, the 524-residue chain is 2-isopropylmalate synthase (524 aa).

Residues 5-267 (VIIFDTTLRD…HTNIRHSEIH (263 aa)) enclose the Pyruvate carboxyltransferase domain. The Mn(2+) site is built by Asp-14, His-202, His-204, and Asn-238. Residues 392-524 (KLEYLGVQSG…KTDKINTESV (133 aa)) form a regulatory domain region.

The protein belongs to the alpha-IPM synthase/homocitrate synthase family. LeuA type 1 subfamily. As to quaternary structure, homodimer. It depends on Mn(2+) as a cofactor.

Its subcellular location is the cytoplasm. The catalysed reaction is 3-methyl-2-oxobutanoate + acetyl-CoA + H2O = (2S)-2-isopropylmalate + CoA + H(+). It participates in amino-acid biosynthesis; L-leucine biosynthesis; L-leucine from 3-methyl-2-oxobutanoate: step 1/4. In terms of biological role, catalyzes the condensation of the acetyl group of acetyl-CoA with 3-methyl-2-oxobutanoate (2-ketoisovalerate) to form 3-carboxy-3-hydroxy-4-methylpentanoate (2-isopropylmalate). The chain is 2-isopropylmalate synthase from Aeromonas hydrophila subsp. hydrophila (strain ATCC 7966 / DSM 30187 / BCRC 13018 / CCUG 14551 / JCM 1027 / KCTC 2358 / NCIMB 9240 / NCTC 8049).